A 530-amino-acid chain; its full sequence is ATP-dependent RNA helicase DBP3 (530 aa).

Basic and acidic residues predominate over residues 1-20 (MSKDEIKDKKRKSEEYEVVD). A disordered region spans residues 1–77 (MSKDEIKDKK…VASVSTSSTV (77 aa)). Positions 19–58 (VDKKKHKKDKKDKKEKKDKKEKKLKKDKKDKKDKKETKSE) form a coiled coil. Residues 21 to 50 (KKKHKKDKKDKKEKKDKKEKKLKKDKKDKK) are compositionally biased toward basic residues. Residues 67–77 (SVASVSTSSTV) show a composition bias toward low complexity. Positions 117 to 143 (LSFSHISLDSRIQAEISKFPKPTPIQA) match the Q motif motif. In terms of domain architecture, Helicase ATP-binding spans 146-322 (WPYLLAGKDV…STFMNSPIKV (177 aa)). Residue 159–166 (AETGSGKT) coordinates ATP. A DEAD box motif is present at residues 269 to 272 (DEAD). The Helicase C-terminal domain maps to 351–500 (KLLELLKKYQ…PVPEELKKFG (150 aa)).

Belongs to the DEAD box helicase family. DDX5/DBP2 subfamily.

The protein resides in the nucleus. The protein localises to the nucleolus. The enzyme catalyses ATP + H2O = ADP + phosphate + H(+). Its function is as follows. ATP-dependent RNA helicase required for 60S ribosomal subunit synthesis. Involved in efficient pre-rRNA processing, predominantly at site A3, which is necessary for the normal formation of 25S and 5.8S rRNAs. The protein is ATP-dependent RNA helicase DBP3 (DBP3) of Vanderwaltozyma polyspora (strain ATCC 22028 / DSM 70294 / BCRC 21397 / CBS 2163 / NBRC 10782 / NRRL Y-8283 / UCD 57-17) (Kluyveromyces polysporus).